The following is a 357-amino-acid chain: DnaJ homolog subfamily C member 25 (357 aa).

The helical transmembrane segment at 19-39 threads the bilayer; it reads WLLLAPLLLVPLLARPAEALV. The region spanning 48-121 is the J domain; sequence DCYEVLGVSR…ETRKDYDYML (74 aa). A run of 2 helical transmembrane segments spans residues 147 to 167 and 241 to 261; these read VVILVSVCAISMFQYFSWWNS and LLLFQVILAPVHLCSYIAWYC.

It belongs to the DNAJC25 family.

It localises to the membrane. The protein is DnaJ homolog subfamily C member 25 (Dnajc25) of Mus musculus (Mouse).